A 447-amino-acid chain; its full sequence is Teichoic acids export ATP-binding protein TagH (447 aa).

In terms of domain architecture, ABC transporter spans 24-246 (DKLKTLFSVF…YRAFLHRYNH (223 aa)). 60-67 (GLNGSGKS) is an ATP binding site. A unknown region spans residues 247–447 (FTEPQKESYQ…QVLKLKEVTE (201 aa)). The tract at residues 359 to 393 (NAVKTTKTKPASTKESRQQEEVQPSPTNVPENNNS) is disordered. 2 stretches are compositionally biased toward polar residues: residues 360–369 (AVKTTKTKPA) and 379–393 (EVQP…NNNS). In terms of domain architecture, LysM spans 398-442 (STYTVEVGDSVSLIAENHGLTIEQLQTLNPEIIEVPIYPGQVLKL).

This sequence belongs to the ABC transporter superfamily. Teichoic acids exporter (TC 3.A.1.104.1) family. The complex is composed of two ATP-binding proteins (TagH) and two transmembrane proteins (TagG).

Its subcellular location is the cell membrane. It catalyses the reaction ATP + H2O + teichoic acidSide 1 = ADP + phosphate + teichoic acidSide 2.. Functionally, part of the ABC transporter complex TagGH involved in teichoic acids export. Responsible for energy coupling to the transport system. The sequence is that of Teichoic acids export ATP-binding protein TagH from Enterococcus faecalis (strain ATCC 700802 / V583).